We begin with the raw amino-acid sequence, 345 residues long: DNA N(6)-methyladenine demethylase ALKBH1A (345 aa).

Residues tryptophan 179 and 186 to 188 (FDW) contribute to the substrate site. Residues 225–345 (RPEGAIVNYF…RININIRQVF (121 aa)) form the Fe2OG dioxygenase domain. 232–234 (NYF) contributes to the 2-oxoglutarate binding site. Fe cation contacts are provided by histidine 243, aspartate 245, and histidine 299. 336–342 (RININIR) is a 2-oxoglutarate binding site.

It belongs to the alkB family. Fe(2+) is required as a cofactor. In terms of tissue distribution, mostly expressed in siliques, to a lower extent in roots, seedlings and rosette leaves, but barely in cauline leaves, stems and flowers.

The protein resides in the nucleus. It is found in the cytoplasm. The catalysed reaction is an N(6)-methyl-2'-deoxyadenosine in DNA + 2-oxoglutarate + O2 = a 2'-deoxyadenosine in DNA + formaldehyde + succinate + CO2. Dioxygenase that catalyzes DNA N(6)-methyladenine (6 mA) demethylation to modulate gene expression and regulate seed germination. In Arabidopsis thaliana (Mouse-ear cress), this protein is DNA N(6)-methyladenine demethylase ALKBH1A.